Here is a 327-residue protein sequence, read N- to C-terminus: DNA-directed RNA polymerase subunit alpha (327 aa).

An alpha N-terminal domain (alpha-NTD) region spans residues 1 to 243 (MEKFLKYEIK…EHLNPIVNVN (243 aa)). Positions 260–327 (RVRSFAKQIE…VHELGLKLRS (68 aa)) are alpha C-terminal domain (alpha-CTD).

It belongs to the RNA polymerase alpha chain family. As to quaternary structure, homodimer. The RNAP catalytic core consists of 2 alpha, 1 beta, 1 beta' and 1 omega subunit. When a sigma factor is associated with the core the holoenzyme is formed, which can initiate transcription.

The enzyme catalyses RNA(n) + a ribonucleoside 5'-triphosphate = RNA(n+1) + diphosphate. Its function is as follows. DNA-dependent RNA polymerase catalyzes the transcription of DNA into RNA using the four ribonucleoside triphosphates as substrates. The chain is DNA-directed RNA polymerase subunit alpha from Mycoplasma pneumoniae (strain ATCC 29342 / M129 / Subtype 1) (Mycoplasmoides pneumoniae).